The following is a 221-amino-acid chain: 7-cyano-7-deazaguanine synthase (221 aa).

10–20 (FSGGQDSTTCL) provides a ligand contact to ATP. The Zn(2+) site is built by Cys-186, Cys-195, Cys-198, and Cys-201.

It belongs to the QueC family. As to quaternary structure, homodimer. Zn(2+) is required as a cofactor.

It carries out the reaction 7-carboxy-7-deazaguanine + NH4(+) + ATP = 7-cyano-7-deazaguanine + ADP + phosphate + H2O + H(+). It participates in purine metabolism; 7-cyano-7-deazaguanine biosynthesis. Catalyzes the ATP-dependent conversion of 7-carboxy-7-deazaguanine (CDG) to 7-cyano-7-deazaguanine (preQ(0)). In Geobacillus sp. (strain WCH70), this protein is 7-cyano-7-deazaguanine synthase.